Here is a 197-residue protein sequence, read N- to C-terminus: Nucleoside triphosphate pyrophosphatase (197 aa).

Catalysis depends on D74, which acts as the Proton acceptor.

The protein belongs to the Maf family. It depends on a divalent metal cation as a cofactor.

The protein localises to the cytoplasm. The enzyme catalyses a ribonucleoside 5'-triphosphate + H2O = a ribonucleoside 5'-phosphate + diphosphate + H(+). It carries out the reaction a 2'-deoxyribonucleoside 5'-triphosphate + H2O = a 2'-deoxyribonucleoside 5'-phosphate + diphosphate + H(+). Its function is as follows. Nucleoside triphosphate pyrophosphatase. May have a dual role in cell division arrest and in preventing the incorporation of modified nucleotides into cellular nucleic acids. This chain is Nucleoside triphosphate pyrophosphatase, found in Granulibacter bethesdensis (strain ATCC BAA-1260 / CGDNIH1).